A 196-amino-acid chain; its full sequence is Peptidyl-tRNA hydrolase (196 aa).

Residue Tyr-18 participates in tRNA binding. His-23 (proton acceptor) is an active-site residue. Residues Phe-69, Asn-71, and Asn-117 each coordinate tRNA.

The protein belongs to the PTH family. In terms of assembly, monomer.

Its subcellular location is the cytoplasm. The enzyme catalyses an N-acyl-L-alpha-aminoacyl-tRNA + H2O = an N-acyl-L-amino acid + a tRNA + H(+). In terms of biological role, hydrolyzes ribosome-free peptidyl-tRNAs (with 1 or more amino acids incorporated), which drop off the ribosome during protein synthesis, or as a result of ribosome stalling. Functionally, catalyzes the release of premature peptidyl moieties from peptidyl-tRNA molecules trapped in stalled 50S ribosomal subunits, and thus maintains levels of free tRNAs and 50S ribosomes. This Aliivibrio salmonicida (strain LFI1238) (Vibrio salmonicida (strain LFI1238)) protein is Peptidyl-tRNA hydrolase.